The following is a 323-amino-acid chain: Acetyl-coenzyme A carboxylase carboxyl transferase subunit alpha (323 aa).

The CoA carboxyltransferase C-terminal domain maps to 35–296 (EVLSELDELR…GMTLKKCLDE (262 aa)).

It belongs to the AccA family. Acetyl-CoA carboxylase is a heterohexamer composed of biotin carboxyl carrier protein (AccB), biotin carboxylase (AccC) and two subunits each of ACCase subunit alpha (AccA) and ACCase subunit beta (AccD).

The protein localises to the cytoplasm. It carries out the reaction N(6)-carboxybiotinyl-L-lysyl-[protein] + acetyl-CoA = N(6)-biotinyl-L-lysyl-[protein] + malonyl-CoA. The protein operates within lipid metabolism; malonyl-CoA biosynthesis; malonyl-CoA from acetyl-CoA: step 1/1. Component of the acetyl coenzyme A carboxylase (ACC) complex. First, biotin carboxylase catalyzes the carboxylation of biotin on its carrier protein (BCCP) and then the CO(2) group is transferred by the carboxyltransferase to acetyl-CoA to form malonyl-CoA. In Aquifex aeolicus (strain VF5), this protein is Acetyl-coenzyme A carboxylase carboxyl transferase subunit alpha.